Here is a 73-residue protein sequence, read N- to C-terminus: Ocellatin-PT7 (73 aa).

The signal sequence occupies residues 1–22; that stretch reads MAFLKKSLFLVLFLGLVSLSIC. Positions 23–39 are excised as a propeptide; it reads DEEKRQDEDDDDDDDEE.

In terms of tissue distribution, expressed by the skin glands.

The protein localises to the secreted. Has antibacterial activity against Gram-negative bacteria E.coli ATCC 25922 (MIC=60 uM) and S.choleraesuis ATCC 14028 (MIC=240 uM) and against Gram-positive bacterium S.aureus ATCC 29313 (MIC=240 uM). Shows no hemolytic activity and no cytotoxicity. This chain is Ocellatin-PT7, found in Leptodactylus pustulatus (Ceara white-lipped frog).